A 602-amino-acid polypeptide reads, in one-letter code: MSSDPMRNIRNFSIIAHVDHGKSTLADRIIQLCGGLEAREMEAQVLDSNPIERERGITIKAQSVSLLYKAQDGQNYHLNLIDTPGHVDFSYEVSRSLAACEGALLVVDASQGVEAQSVANCYTAVEQGLEVVPILNKIDLPTADTERAKAEIEAVIGIDASEAVAVSAKTGLYVEQVLEAIVQRIPAPQPRDTEKLQALIIDSWFDNYLGVVSLVRVMQGEITPGAKLLVMSTGRSHPVDAVGVFTPKRKTLAKLTAGEVGWVTASIKDVHGAPVGDTLTLANDPAPKPLPGFQEVQPRVFAGLFPVDAEDYPDLREALEKLRLNDAALRFEPENSEAMGFGFRCGFLGMLHMEIVQERLEREYDLNLITTAPTVIYEVLKTDGTLVAMDNPAKMPPINQINEIREPIIRSNILTPPEYVGAVITLCEEKRGSQIGITYLGNQVQVAYELPMAEVVLDFFDKLKSVTRGYASLDYHFLRFQEGPFVRVDTLINGDRVDALSVIVHRHQAERRGRELCEKMKDLIPRQMFDVAIQAAIGSQIISRSTVKAMRKNVLAKCYGGDISRKKKLLEKQKEGKKRMKQIGRVEIPQEAFLAVLQIDNK.

Residues Arg7–Gln189 enclose the tr-type G domain. GTP-binding positions include Asp19 to Thr24 and Asn136 to Asp139.

Belongs to the TRAFAC class translation factor GTPase superfamily. Classic translation factor GTPase family. LepA subfamily.

It is found in the cell inner membrane. The enzyme catalyses GTP + H2O = GDP + phosphate + H(+). Its function is as follows. Required for accurate and efficient protein synthesis under certain stress conditions. May act as a fidelity factor of the translation reaction, by catalyzing a one-codon backward translocation of tRNAs on improperly translocated ribosomes. Back-translocation proceeds from a post-translocation (POST) complex to a pre-translocation (PRE) complex, thus giving elongation factor G a second chance to translocate the tRNAs correctly. Binds to ribosomes in a GTP-dependent manner. The polypeptide is Elongation factor 4 (Xylella fastidiosa (strain 9a5c)).